The primary structure comprises 543 residues: MAKSILFGEESRRAMQAGVDKLANAVKVTLGPKGRNVVLDKKFGSPLITNDGVTIAKEIELEDPYENMGAQLVKEVATKTNDVAGDGTTTATLLAQAIIREGLKNVTAGANPMLIRKGIKLAVDTAVEQIKKSSKQVDGKEDIARVAAISAADPEIGKLIADAMERVGNEGVITVEESNTMATELEVVEGMQFDRGYLSPYMVTDAEKMEAVLENPYILLTDKKISNIQEILPILEQIVQQGKKLLIIAEDIEGEALATLVVNKLRGTFTCVAVKAPGFGDRRKEMLRDIAILTGGEVISEELGREIKDVTLDMLGTAESIKVTKENTTIVNGKGSKAEIEDRIGQIKRQIEETTSEFDKEKLQERLAKIAGGVAVVKVGAATETELKERKLRIEDALAATKAAVEEGIVAGGGTAYLRAIKEVEKLTDNNSEIRLGIAIIRRALEEPVRQIASNAGLEGSVIIDKIMNGQEGMGFDALEGEYVNMVQKGIVDPAKVTRSALQNAASVASTFLTTECVVAEIPEKNPAPQAPGMGGMGMEGMY.

ATP-binding positions include Thr29–Pro32, Asp86–Thr90, Gly413, Asp477–Leu479, and Asp493.

It belongs to the chaperonin (HSP60) family. In terms of assembly, forms a cylinder of 14 subunits composed of two heptameric rings stacked back-to-back. Interacts with the co-chaperonin GroES.

It localises to the cytoplasm. The enzyme catalyses ATP + H2O + a folded polypeptide = ADP + phosphate + an unfolded polypeptide.. In terms of biological role, together with its co-chaperonin GroES, plays an essential role in assisting protein folding. The GroEL-GroES system forms a nano-cage that allows encapsulation of the non-native substrate proteins and provides a physical environment optimized to promote and accelerate protein folding. The sequence is that of Chaperonin GroEL from Clostridium botulinum.